Reading from the N-terminus, the 228-residue chain is Orotate phosphoribosyltransferase (228 aa).

Residue lysine 26 coordinates 5-phospho-alpha-D-ribose 1-diphosphate. Residue phenylalanine 34 to phenylalanine 35 participates in orotate binding. 5-phospho-alpha-D-ribose 1-diphosphate is bound by residues tyrosine 72–lysine 73, arginine 98, lysine 99, lysine 102, histidine 104, and aspartate 123–serine 131. Serine 127 and arginine 155 together coordinate orotate.

The protein belongs to the purine/pyrimidine phosphoribosyltransferase family. PyrE subfamily. In terms of assembly, homodimer. Mg(2+) is required as a cofactor.

The enzyme catalyses orotidine 5'-phosphate + diphosphate = orotate + 5-phospho-alpha-D-ribose 1-diphosphate. Its pathway is pyrimidine metabolism; UMP biosynthesis via de novo pathway; UMP from orotate: step 1/2. Its function is as follows. Catalyzes the transfer of a ribosyl phosphate group from 5-phosphoribose 1-diphosphate to orotate, leading to the formation of orotidine monophosphate (OMP). This is Orotate phosphoribosyltransferase from Nitrosospira multiformis (strain ATCC 25196 / NCIMB 11849 / C 71).